We begin with the raw amino-acid sequence, 272 residues long: Probable protein VP2 (272 aa).

2 disordered regions span residues 50-116 (GGSR…DFAD) and 195-272 (YSPA…SSSS). Pro residues predominate over residues 78–90 (APDPPAGNQPPAL). Over residues 94 to 108 (GDGGNESGAGGGESG) the composition is skewed to gly residues. Positions 218–230 (SKRDNKENRDRGR) are enriched in basic and acidic residues. Basic residues predominate over residues 231–246 (AKARAKQKPKKRRRRA). Over residues 249–272 (ESSSSSSSKSSFNSEEGSSASSSS) the composition is skewed to low complexity.

Phosphorylated at C-terminal serines.

The sequence is that of Probable protein VP2 from Homo sapiens (Human).